We begin with the raw amino-acid sequence, 757 residues long: Lysyl oxidase homolog 4 (757 aa).

Residues 1-25 (MMWPQPPTFSLFLLLLLSQAPSSRP) form the signal peptide. SRCR domains follow at residues 33–134 (LRLV…VVCH), 160–288 (VRLK…VSCV), 312–412 (VRLR…VRCN), and 422–530 (VRLA…VACM). Cystine bridges form between Cys-59-Cys-123, Cys-72-Cys-133, Cys-103-Cys-113, Cys-192-Cys-277, Cys-205-Cys-287, Cys-252-Cys-262, Cys-337-Cys-401, Cys-350-Cys-411, Cys-381-Cys-391, Cys-451-Cys-516, Cys-464-Cys-529, Cys-498-Cys-508, Cys-559-Cys-565, Cys-611-Cys-659, Cys-643-Cys-649, Cys-671-Cys-681, and Cys-718-Cys-732. Asn-199 carries an N-linked (GlcNAc...) asparagine glycan. The lysyl-oxidase like stretch occupies residues 534–737 (PDLVMNAQLV…WLHNCHTGDS (204 aa)). 3 residues coordinate Cu cation: His-612, His-614, and His-616. N-linked (GlcNAc...) asparagine glycosylation occurs at Asn-630. The segment at residues 639–675 (KASFCLEDTNCPSGVQRRYACANFGEQGVAVGCWDTY) is a cross-link (lysine tyrosylquinone (Lys-Tyr)). A 2',4',5'-topaquinone modification is found at Tyr-675.

The protein belongs to the lysyl oxidase family. It depends on Cu cation as a cofactor. Lysine tyrosylquinone residue serves as cofactor. Post-translationally, the lysine tyrosylquinone cross-link (LTQ) is generated by condensation of the epsilon-amino group of a lysine with a topaquinone produced by oxidation of tyrosine. May be proteolytically cleaved by BMP1.

It localises to the secreted. The protein localises to the extracellular space. The catalysed reaction is L-lysyl-[protein] + O2 + H2O = (S)-2-amino-6-oxohexanoyl-[protein] + H2O2 + NH4(+). Functionally, catalyzes the oxidative deamination of lysine and hydroxylysine residues in collagen and elastin, resulting in the formation of covalent cross-linkages, and the stabilization of collagen and elastin fibers. The chain is Lysyl oxidase homolog 4 (Loxl4) from Mus musculus (Mouse).